Reading from the N-terminus, the 417-residue chain is Ribonuclease T2-like (417 aa).

Residues 1–22 form the signal peptide; it reads MSSISGFLGAIPGAQQILQTMA. Intrachain disulfides connect Cys-45–Cys-63, Cys-52–Cys-99, Cys-62–Cys-165, Cys-107–Cys-157, and Cys-229–Cys-264. The active site involves His-92. Residue Asn-115 is glycosylated (N-linked (GlcNAc...) asparagine). Residues Glu-150 and His-154 contribute to the active site. The disordered stretch occupies residues 274–296; the sequence is KTPNKDPGHGHEPTKTRHPHGPT. Over residues 276–288 the composition is skewed to basic and acidic residues; it reads PNKDPGHGHEPTK. N-linked (GlcNAc...) asparagine glycosylation occurs at Asn-383.

The protein belongs to the RNase T2 family.

It localises to the vacuole lumen. Its subcellular location is the cytoplasm. It catalyses the reaction a ribonucleotidyl-ribonucleotide-RNA + H2O = a 3'-end 3'-phospho-ribonucleotide-RNA + a 5'-end dephospho-ribonucleoside-RNA + H(+). In terms of biological role, rnase which modulates cell survival under stress conditions. Released from the vacuole to the cytoplasm during stress to promote tRNA and rRNA cleavage and to activate separately a downstream pathway that promotes cell death. Involved in cell size, vacuolar morphology and growth at high temperatures and high salt concentration. This chain is Ribonuclease T2-like (rny1), found in Emericella nidulans (strain FGSC A4 / ATCC 38163 / CBS 112.46 / NRRL 194 / M139) (Aspergillus nidulans).